The sequence spans 432 residues: Glutamyl-tRNA reductase (432 aa).

Substrate-binding positions include 55 to 58 (TCNR), Ser-114, 119 to 121 (ETQ), and Gln-125. Cys-56 functions as the Nucleophile in the catalytic mechanism. 194-199 (GAGEMI) serves as a coordination point for NADP(+).

It belongs to the glutamyl-tRNA reductase family. As to quaternary structure, homodimer.

The catalysed reaction is (S)-4-amino-5-oxopentanoate + tRNA(Glu) + NADP(+) = L-glutamyl-tRNA(Glu) + NADPH + H(+). The protein operates within porphyrin-containing compound metabolism; protoporphyrin-IX biosynthesis; 5-aminolevulinate from L-glutamyl-tRNA(Glu): step 1/2. Its function is as follows. Catalyzes the NADPH-dependent reduction of glutamyl-tRNA(Glu) to glutamate 1-semialdehyde (GSA). The polypeptide is Glutamyl-tRNA reductase (Burkholderia thailandensis (strain ATCC 700388 / DSM 13276 / CCUG 48851 / CIP 106301 / E264)).